The following is a 270-amino-acid chain: A-type potassium channel modulatory protein KCNIP2 (270 aa).

Basic and acidic residues predominate over residues 1 to 17; it reads MRGQGRKESLSESRDLD. Positions 1 to 34 are disordered; sequence MRGQGRKESLSESRDLDGSYDQLTGHPPGPSKKA. Phosphoserine is present on serine 9. S-palmitoyl cysteine attachment occurs at residues cysteine 45 and cysteine 46. The EF-hand 1; degenerate domain occupies 81–137; it reads FELSTVCHRPEGLEQLQEQTKFTRRELQVLYRGFKNECPSGIVNEENFKQIYSQFFP. 3 consecutive EF-hand domains span residues 140–175, 176–211, and 224–259; these read DSSNYATFLFNAFDTNHDGSVSFEDFVAGLSVILRG, TIDDRLSWAFNLYDLNKDGCITKEEMLDIMKSIYDM, and APREHVESFFQKMDRNKDGVVTIEEFIESCQQDENI. 14 residues coordinate Ca(2+): aspartate 153, asparagine 155, aspartate 157, serine 159, aspartate 164, aspartate 189, asparagine 191, aspartate 193, cysteine 195, glutamate 200, aspartate 237, asparagine 239, aspartate 241, and glutamate 248. The tract at residues 257–270 is interaction with KCND2; the sequence is ENIMRSMQLFDNVI.

This sequence belongs to the recoverin family. As to quaternary structure, component of heteromultimeric potassium channels. Identified in potassium channel complexes containing KCND1, KCND2, KCND3, KCNIP1, KCNIP2, KCNIP3, KCNIP4, DPP6 and DPP10. The KCND2-KCNIP2 channel complex contains four KCND2 and four KCNIP2 subunits. Interacts with KCND2. Probably part of a complex consisting of KCNIP1, KCNIP2 isoform 3 and KCND2. At least isoform 2 and isoform 3 can self-associate to form homodimers and homotetramers. Isoform 3 interacts with KCNIP1 in a calcium-dependent manner. Interacts with KCND3; each KCNIP2 monomer interacts with two adjacent KCND3 subunits, through both the N-terminal inactivation ball of a KCND3 subunit and a C-terminal helix from the adjacent KCND3 subunit, clamping them together; this interaction modulates the channel gating kinetics. Palmitoylated. Palmitoylation enhances association with the plasma membrane. As to expression, expressed in heart, brain and lung. In brain, abundantly expressed in striatum, hippocampus and olfactory bulb, moderately expressed in cerebral cortex and lowly expressed in thalamus and hypothalamus. Isoform 1 is predominant in cerebral cortex, striatum and hippocampus. Isoform 1, isoform 2 and isoform 3 are equally expressed in olfactory bulb. Iisoform 3 is expressed at high levels and isoform 1 at low levels in heart (in PubMed:11263977).

Its subcellular location is the cell membrane. Functionally, regulatory subunit of Kv4/D (Shal)-type voltage-gated rapidly inactivating A-type potassium channels. Modulates channel density, inactivation kinetics and rate of recovery from inactivation in a calcium-dependent and isoform-specific manner. Involved in KCND2 and KCND3 trafficking to the cell surface. Essential for the expression of I(To) currents in the heart. Required for normal protein levels of KCND2 in the heart ventricle. This chain is A-type potassium channel modulatory protein KCNIP2, found in Rattus norvegicus (Rat).